The primary structure comprises 396 residues: DNA polymerase IV (396 aa).

The 188-residue stretch at 5 to 192 (IFHVDVNSAF…LPVGELFMVG (188 aa)) folds into the UmuC domain. Asp-9 and Asp-111 together coordinate Mg(2+). Residue Glu-112 is part of the active site.

This sequence belongs to the DNA polymerase type-Y family. As to quaternary structure, monomer. The cofactor is Mg(2+).

The protein resides in the cytoplasm. It catalyses the reaction DNA(n) + a 2'-deoxyribonucleoside 5'-triphosphate = DNA(n+1) + diphosphate. Functionally, poorly processive, error-prone DNA polymerase involved in untargeted mutagenesis. Copies undamaged DNA at stalled replication forks, which arise in vivo from mismatched or misaligned primer ends. These misaligned primers can be extended by PolIV. Exhibits no 3'-5' exonuclease (proofreading) activity. May be involved in translesional synthesis, in conjunction with the beta clamp from PolIII. The sequence is that of DNA polymerase IV from Clostridium acetobutylicum (strain ATCC 824 / DSM 792 / JCM 1419 / IAM 19013 / LMG 5710 / NBRC 13948 / NRRL B-527 / VKM B-1787 / 2291 / W).